The sequence spans 80 residues: Consomatin Mrc1 (80 aa).

The N-terminal stretch at 1–22 (MQTAYWVMVMMMVWITAPLSEG) is a signal peptide. Residues 23–57 (GKLNDVIRGLVPDDVTPQLILRSLISRRPSDSVVR) constitute a propeptide that is removed on maturation. A disulfide bridge connects residues C63 and C68. W65 carries the D-tryptophan modification. 4 positions are modified to 4-hydroxyproline: P69, P70, P71, and P72. Positions 74–80 (RRPNGKG) are excised as a propeptide.

It belongs to the conotoxin C superfamily. Consomatin family. In terms of tissue distribution, expressed by the venom duct.

The protein resides in the secreted. Functionally, moderately activates human somatostatin receptors (SSTR) with a preferential activation of SSTR1 and SSTR4. In vivo, does not cause behavioral changes in mice within a few minutes of intracranial injection, but causes a progressive loss of movement thereafter. Four to five hours after injection, mice recover, even with the highest dose tested. Shows antinociception and antihyperalgesia activities in two mouse models of acute pain, most probably by acting outside the central nervous system. The protein is Consomatin Mrc1 of Conus mercator (Trader cone).